We begin with the raw amino-acid sequence, 231 residues long: NADH-ubiquinone oxidoreductase chain 4 (231 aa).

Helical transmembrane passes span 1–21 (PIAGSMVLAAILLKLGGYGII), 34–54 (MFLPFVVLALWGAILANLTCL), 63–85 (IAYSSISHMGLVVAAIIIQTPWG), 89–111 (AMALMIAHGFTSSALFCLANTTY), 128–148 (ILPMATTWWLLTNLMNIAVPP), and 156–176 (LLIMSALFNWCPTTIIMLGLS).

This sequence belongs to the complex I subunit 4 family.

The protein localises to the mitochondrion membrane. The enzyme catalyses a ubiquinone + NADH + 5 H(+)(in) = a ubiquinol + NAD(+) + 4 H(+)(out). Core subunit of the mitochondrial membrane respiratory chain NADH dehydrogenase (Complex I) that is believed to belong to the minimal assembly required for catalysis. Complex I functions in the transfer of electrons from NADH to the respiratory chain. The immediate electron acceptor for the enzyme is believed to be ubiquinone. This Agkistrodon contortrix contortrix (Southern copperhead) protein is NADH-ubiquinone oxidoreductase chain 4 (MT-ND4).